The sequence spans 467 residues: Glutamate--tRNA ligase (467 aa).

Residues 13–23 (PSPTGYLHVGG) carry the 'HIGH' region motif. The 'KMSKS' region motif lies at 245-249 (KLSKR). Lys248 is an ATP binding site.

Belongs to the class-I aminoacyl-tRNA synthetase family. Glutamate--tRNA ligase type 1 subfamily. In terms of assembly, monomer.

Its subcellular location is the cytoplasm. It carries out the reaction tRNA(Glu) + L-glutamate + ATP = L-glutamyl-tRNA(Glu) + AMP + diphosphate. Its function is as follows. Catalyzes the attachment of glutamate to tRNA(Glu) in a two-step reaction: glutamate is first activated by ATP to form Glu-AMP and then transferred to the acceptor end of tRNA(Glu). In Herminiimonas arsenicoxydans, this protein is Glutamate--tRNA ligase.